We begin with the raw amino-acid sequence, 138 residues long: Basic leucine zipper 8 (138 aa).

Residues 30–67 (NLPATSDDSSRTAEDNERKRRRKVSNRESARRSRMRKQ) form a disordered region. Positions 37 to 47 (DSSRTAEDNER) are enriched in basic and acidic residues. In terms of domain architecture, bZIP spans 45–108 (NERKRRRKVS…EKVIEENMKL (64 aa)). Residues 47-68 (RKRRRKVSNRESARRSRMRKQR) are basic motif. The Nuclear localization signal motif lies at 48-55 (KRRRKVSN). The interval 73 to 87 (LWSMLVQLINKNKSL) is leucine-zipper.

Belongs to the bZIP family. As to quaternary structure, homodimer.

The protein localises to the nucleus. This chain is Basic leucine zipper 8, found in Arabidopsis thaliana (Mouse-ear cress).